Reading from the N-terminus, the 249-residue chain is MTHQPQQSPQFFLTAPSPCPYLEGQMERKVFTHLVGDKANEINDLLTQGGFRRSQNIAYRPACELCRACISVRILAGEFKMTRNMRRVWTQNNDLIGRVHKAQPSTEQYALFRDYLDARHRSGGMSDMTVLDYAMMIEDTHVNTQIIEYRKRGPESFISAKGDGELIAVALTDVMADGLSMVYSFFSPHMHDRSLGTYMILDHIQRAHAAGLPHVYLGYWVEGSRKMQYKIRFTPQEHLGPRGWQRFEG.

It belongs to the R-transferase family. Bpt subfamily.

It localises to the cytoplasm. The enzyme catalyses N-terminal L-glutamyl-[protein] + L-leucyl-tRNA(Leu) = N-terminal L-leucyl-L-glutamyl-[protein] + tRNA(Leu) + H(+). It catalyses the reaction N-terminal L-aspartyl-[protein] + L-leucyl-tRNA(Leu) = N-terminal L-leucyl-L-aspartyl-[protein] + tRNA(Leu) + H(+). Its function is as follows. Functions in the N-end rule pathway of protein degradation where it conjugates Leu from its aminoacyl-tRNA to the N-termini of proteins containing an N-terminal aspartate or glutamate. This chain is Aspartate/glutamate leucyltransferase, found in Brucella anthropi (strain ATCC 49188 / DSM 6882 / CCUG 24695 / JCM 21032 / LMG 3331 / NBRC 15819 / NCTC 12168 / Alc 37) (Ochrobactrum anthropi).